The chain runs to 411 residues: Zinc metalloproteinase/disintegrin (411 aa).

The first 20 residues, 1 to 20 (MIEVLLVTICLAVFPYQGSS), serve as a signal peptide directing secretion. A propeptide spanning residues 21–190 (IILESGNVND…KASQLYLTPE (170 aa)) is cleaved from the precursor. A Peptidase M12B domain is found at 197 to 395 (RYVKLAIVVD…SKPQCILNAP (199 aa)). D284 serves as a coordination point for Ca(2+). Intrachain disulfides connect C308-C390, C352-C374, and C354-C357. Position 333 (H333) interacts with Zn(2+). Residue E334 is part of the active site. Zn(2+) contacts are provided by H337 and H343. Residues C390 and N393 each coordinate Ca(2+). Residues 396–411 (LRTDTVSTPVSGNEPL) constitute a propeptide that is removed on maturation.

It belongs to the venom metalloproteinase (M12B) family. P-II subfamily. In terms of assembly, monomer. The cofactor is Zn(2+). Expressed by the venom gland.

It localises to the secreted. In terms of biological role, snake venom metalloproteinase that impairs hemostasis in the envenomed animal. This chain is Zinc metalloproteinase/disintegrin, found in Protobothrops mucrosquamatus (Taiwan habu).